The primary structure comprises 699 residues: Protein STRUBBELIG-RECEPTOR FAMILY 5 (699 aa).

An N-terminal signal peptide occupies residues 1–22 (MTQKLVRLVIVSLAITVTLLQA). Residues 23–273 (KTDNQEVSAL…DGGGITAGTG (251 aa)) are Extracellular-facing. LRR repeat units lie at residues 93 to 115 (SLTTFDLSKNNLKGNIPYQLPPN), 116 to 136 (IANLDFSENELDGNVPYSLSQ), 139 to 161 (NLQSINLGQNKLNGELPDMFQKL), 163 to 186 (KLETLDFSLNKLSGKLPQSFANLT), and 187 to 209 (SLKKLHLQDNRFTGDINVLRNLA). Residue asparagine 184 is glycosylated (N-linked (GlcNAc...) asparagine). The tract at residues 239–263 (NDWSTETAPPPPPGVKYGRKSSGSK) is disordered. The helical transmembrane segment at 274 to 294 (MVIAGACLGVLVLIIVLIALV) threads the bilayer. Over 295–699 (SKKKSSLSPH…SYRAHDDYDY (405 aa)) the chain is Cytoplasmic. Serine 368 carries the post-translational modification Phosphoserine. The region spanning 404–675 (FSPGNLLGEG…SEVVEALVRM (272 aa)) is the Protein kinase domain. Residues 410–418 (LGEGSIGRV) and lysine 432 each bind ATP.

This sequence belongs to the protein kinase superfamily. Ser/Thr protein kinase family. As to expression, expressed in leaves and flowers.

It localises to the membrane. The polypeptide is Protein STRUBBELIG-RECEPTOR FAMILY 5 (SRF5) (Arabidopsis thaliana (Mouse-ear cress)).